Reading from the N-terminus, the 380-residue chain is Tubulin alpha chain (380 aa).

GTP-binding residues include E46, S115, G119, T120, T154, N181, and N202. A Mg(2+)-binding site is contributed by E46. The active site involves E228.

Belongs to the tubulin family. As to quaternary structure, dimer of alpha and beta chains. A typical microtubule is a hollow water-filled tube with an outer diameter of 25 nm and an inner diameter of 15 nM. Alpha-beta heterodimers associate head-to-tail to form protofilaments running lengthwise along the microtubule wall with the beta-tubulin subunit facing the microtubule plus end conferring a structural polarity. Microtubules usually have 13 protofilaments but different protofilament numbers can be found in some organisms and specialized cells. Mg(2+) serves as cofactor.

It is found in the cytoplasm. It localises to the cytoskeleton. The catalysed reaction is GTP + H2O = GDP + phosphate + H(+). Functionally, tubulin is the major constituent of microtubules, a cylinder consisting of laterally associated linear protofilaments composed of alpha- and beta-tubulin heterodimers. Microtubules grow by the addition of GTP-tubulin dimers to the microtubule end, where a stabilizing cap forms. Below the cap, tubulin dimers are in GDP-bound state, owing to GTPase activity of alpha-tubulin. The protein is Tubulin alpha chain (TUB1) of Encephalitozoon hellem (Microsporidian parasite).